The primary structure comprises 601 residues: UvrABC system protein C (601 aa).

The 80-residue stretch at 15 to 94 (LQPGVYLFKN…IKSYKPRYNI (80 aa)) folds into the GIY-YIG domain. The UVR domain maps to 202–237 (QEIVREKEKEMAMAARSLEFEKAARLRDQIQSLRQL).

The protein belongs to the UvrC family. Interacts with UvrB in an incision complex.

It localises to the cytoplasm. In terms of biological role, the UvrABC repair system catalyzes the recognition and processing of DNA lesions. UvrC both incises the 5' and 3' sides of the lesion. The N-terminal half is responsible for the 3' incision and the C-terminal half is responsible for the 5' incision. The polypeptide is UvrABC system protein C (Syntrophomonas wolfei subsp. wolfei (strain DSM 2245B / Goettingen)).